We begin with the raw amino-acid sequence, 187 residues long: UPF0301 protein Shewmr7_1270 (187 aa).

Belongs to the UPF0301 (AlgH) family.

The polypeptide is UPF0301 protein Shewmr7_1270 (Shewanella sp. (strain MR-7)).